Here is a 522-residue protein sequence, read N- to C-terminus: Cytochrome P450 714C2 (522 aa).

At 1–11 the chain is on the lumenal side; sequence MELFSSQQWLA. Residues 12-32 traverse the membrane as a helical; Signal-anchor for type III membrane protein segment; it reads LLPPIILCILLFSYVYIILWL. The Cytoplasmic portion of the chain corresponds to 33–522; the sequence is RPERLRQKLR…KGVPLIFREL (490 aa). Cys470 is a binding site for heme.

This sequence belongs to the cytochrome P450 family. Requires heme as cofactor.

It localises to the membrane. In terms of biological role, probably not involved in gibberellin metabolism since over-expression of CYP714C2 in a heterologous system does not induce semi-dwarfism. This Oryza sativa subsp. japonica (Rice) protein is Cytochrome P450 714C2 (CYP714C2).